The chain runs to 1260 residues: MLQIRVFNYNDPIDGENIVELRYHNRSPVKAFQIVDGIWIIPERYNFTNDTKKVPDDRALTILEDEVFAVRENDYLTTDVNEKNSFLNNITKLFKRINSSNIGNQLLNYISTSVPYPVVSTNSIKARDYNTIKFDSIDGRRITKSANVLIYGPSMKNLLDKQTRAINGEEAKNGIGCLSDIIFSPNYLSVQTVSSSRFVEDPASSLTHELIHALHNLYGIQYPGEEKFKFGGFIDKLLGTRECIDYEEVLTYGGKDSEIIRKKIDKSLYPDDFVNKYGEMYKRIKGSNPYYPDEKKLKQSFLNRMNPFDQNGTFDTKEFKNHLMDLWFGLNESEFAKEKKILVRKHYITKQINPKYTELTNDVYTEDKGFVNGQSIDNQNFKIIDDLISKKVKLCSITSKNRVNICIDVNKEDLYFISDKEGFENIDFSEPEIRYDSNVTTATTSSFTDHFLVNRTFNDSDRFPPVELEYAIEPAEIVDNTIMPDIDQKSEISLDNLTTFHYLNAQKMDLGFDSSKEQLKMVTSIEESLLDSKKVYTPFTRTAHSVNERISGIAESYLFYQWLKTVINDFTDELNQKSNTDKVADISWIIPYVGPALNIGLDLSHGDFTKAFEDLGVSILFAIAPEFATISLVALSIYENIEEDSQKEKVINKVENTLARRIEKWHQVYAFMVAQWWGMVHTQIDTRIHQMYESLSHQIIAIKANMEYQLSHYKGPDNDKLLLKDYIYEAEIALNTSANRAMKNIERFMIESSISYLKNNLIPSVVENLKKFDADTKKNLDQFIDKNSSVLGSDLHILKSQVDLELNPTTKVAFNIQSIPDFDINALIDRLGIQLKDNLVFSLGVESDKIKDLSGNNTNLEVKTGVQIVDGRDSKTIRLNSNENSSIIVQKNESINFSYFSDFTISFWIRVPRLNKNDFIDLGIEYDLVNNMDNQGWKISLKDGNLVWRMKDRFGKIIDIITSLTFSNSFIDKYISSNIWRHITITVNQLKDCTLYINGDKIDSKSINELRGIDNNSPIIFKLEGNRNKNQFIRLDQFNIYQRALNESEVEMLFNSYFNSNILRDFWGEPLEYNKSYYMINQAILGGPLRSTYKSWYGEYYPYISRMRTFNVSSFILIPYLYHKGSDVEKVKIINKNNVDKYVRKNDVADVKFENYGNLILTLPMYSKIKERYMVLNEGRNGDLKLIQLQSNDKYYCQIRIFEMYRNGLLSIADDENWLYSSGWYLYSSGWYLDNYKTLDLKKHTKTNWYFVSEDEGWKE.

His-208 is a binding site for Zn(2+). Catalysis depends on Glu-209, which acts as the Proton acceptor. Positions 212 and 248 each coordinate Zn(2+). An intrachain disulfide couples Cys-395 to Cys-406. The interval 401 to 824 (NRVNICIDVN…NIQSIPDFDI (424 aa)) is translocation domain (TD). Residues 825–1065 (NALIDRLGIQ…SYFNSNILRD (241 aa)) form an HCN region. The tract at residues 1066 to 1260 (FWGEPLEYNK…FVSEDEGWKE (195 aa)) is HCC.

The protein belongs to the peptidase M27 family. Zn(2+) serves as cofactor.

The catalysed reaction is Limited hydrolysis of proteins of the neuroexocytosis apparatus, synaptobrevins, SNAP25 or syntaxin. No detected action on small molecule substrates.. Its activity is regulated as follows. Preincubation with the metalloprotease inhibitor 1,10-phenanthroline before injection into Anopheles or Aedes decreases toxicity. Its function is as follows. Neurotoxin active against Anopheles but not Aedes mosquitoes upon oral ingestion; expression of the ptox operon (ntnh-orfX1-orfX2-orfX3-pmp1) in B.thuringiensis kills Anopheles but not Aedes mosquito 3rd instar larvae. The ntnh-pmp1 construct is about half as toxic. PMP1 is toxic when injected directly into Anopheles or Aedes mosquito 3rd instar larvae, larvae no longer move, suggesting they are paralyzed. Adult mosquitoes (Anopheles or Aedes) and Drosophila lose the ability to fly in a dose-dependent manner by 24 hours after injection with 100 pg neurotoxin. Not toxic upon injection in mice. Neurotoxin that cleaves A.gambiae syntaxin 1a, probably hydrolyzing the '240-Glu-|-His-241' bond. Does not cleave A.gambiae n-synaptobrevin or SNAP-25, nor human syntaxin 1A. Functionally, responsible for host epithelial cell transcytosis, host nerve cell targeting and translocation of PMP1 light chain (LC) into host cytosol. Composed of 3 subdomains; the translocation domain (TD), and N-terminus and C-terminus of the receptor-binding domain (RBD), called HCN and HCC. This chain is Paraclostridial mosquitocidal protein 1, found in Paraclostridium bifermentans (Clostridium bifermentans).